We begin with the raw amino-acid sequence, 1064 residues long: Carbamoyl phosphate synthase large chain (1064 aa).

Positions 1-401 are carboxyphosphate synthetic domain; it reads MPKRADIKKI…ALMKAIRSLE (401 aa). Residues arginine 129, arginine 169, glycine 175, glycine 176, lysine 208, isoleucine 210, glutamate 215, glycine 241, isoleucine 242, histidine 243, glutamine 284, and glutamate 298 each coordinate ATP. The ATP-grasp 1 domain occupies 133–327; it reads KQLMEALKEP…IAKMAAKIAI (195 aa). Glutamine 284, glutamate 298, and asparagine 300 together coordinate Mg(2+). Mn(2+) contacts are provided by glutamine 284, glutamate 298, and asparagine 300. An oligomerization domain region spans residues 402-546; sequence IGTFALDDLT…YSTYELENES (145 aa). The carbamoyl phosphate synthetic domain stretch occupies residues 547–929; the sequence is LKEKRPSVLV…ALYKAFVAAG (383 aa). One can recognise an ATP-grasp 2 domain in the interval 671–861; the sequence is NQVIKKLDLS…LAQLATRVML (191 aa). ATP is bound by residues arginine 707, serine 746, leucine 748, glutamate 752, glycine 777, valine 778, histidine 779, serine 780, glutamine 820, and glutamate 832. Mg(2+) is bound by residues glutamine 820, glutamate 832, and asparagine 834. Mn(2+)-binding residues include glutamine 820, glutamate 832, and asparagine 834. In terms of domain architecture, MGS-like spans 930–1064; sequence FKVHEHGNVL…VSAINKGDKS (135 aa). The interval 930-1064 is allosteric domain; sequence FKVHEHGNVL…VSAINKGDKS (135 aa).

The protein belongs to the CarB family. In terms of assembly, composed of two chains; the small (or glutamine) chain promotes the hydrolysis of glutamine to ammonia, which is used by the large (or ammonia) chain to synthesize carbamoyl phosphate. Tetramer of heterodimers (alpha,beta)4. Mg(2+) serves as cofactor. Mn(2+) is required as a cofactor.

The catalysed reaction is hydrogencarbonate + L-glutamine + 2 ATP + H2O = carbamoyl phosphate + L-glutamate + 2 ADP + phosphate + 2 H(+). It carries out the reaction hydrogencarbonate + NH4(+) + 2 ATP = carbamoyl phosphate + 2 ADP + phosphate + 2 H(+). The protein operates within amino-acid biosynthesis; L-arginine biosynthesis; carbamoyl phosphate from bicarbonate: step 1/1. It participates in pyrimidine metabolism; UMP biosynthesis via de novo pathway; (S)-dihydroorotate from bicarbonate: step 1/3. In terms of biological role, large subunit of the glutamine-dependent carbamoyl phosphate synthetase (CPSase). CPSase catalyzes the formation of carbamoyl phosphate from the ammonia moiety of glutamine, carbonate, and phosphate donated by ATP, constituting the first step of 2 biosynthetic pathways, one leading to arginine and/or urea and the other to pyrimidine nucleotides. The large subunit (synthetase) binds the substrates ammonia (free or transferred from glutamine from the small subunit), hydrogencarbonate and ATP and carries out an ATP-coupled ligase reaction, activating hydrogencarbonate by forming carboxy phosphate which reacts with ammonia to form carbamoyl phosphate. In Oenococcus oeni (strain ATCC BAA-331 / PSU-1), this protein is Carbamoyl phosphate synthase large chain.